A 359-amino-acid polypeptide reads, in one-letter code: DNA-directed RNA polymerase subunit alpha (359 aa).

Positions Met1–Asn226 are alpha N-terminal domain (alpha-NTD). Residues Ala241–Leu359 are alpha C-terminal domain (alpha-CTD). Residues Phe315–Leu359 form a disordered region. Acidic residues predominate over residues Asn345–Leu359.

Belongs to the RNA polymerase alpha chain family. Homodimer. The RNAP catalytic core consists of 2 alpha, 1 beta, 1 beta' and 1 omega subunit. When a sigma factor is associated with the core the holoenzyme is formed, which can initiate transcription.

The catalysed reaction is RNA(n) + a ribonucleoside 5'-triphosphate = RNA(n+1) + diphosphate. DNA-dependent RNA polymerase catalyzes the transcription of DNA into RNA using the four ribonucleoside triphosphates as substrates. The chain is DNA-directed RNA polymerase subunit alpha from Saccharopolyspora erythraea (strain ATCC 11635 / DSM 40517 / JCM 4748 / NBRC 13426 / NCIMB 8594 / NRRL 2338).